The chain runs to 419 residues: Oligouridylate-binding protein 1B (419 aa).

RRM domains are found at residues 54–128 (RSVY…WAYA) and 139–217 (FNIF…WATK). The tract at residues 217–257 (KGATSGEDKQSSDSKSVVELTSGVSEDGKDTTNGEAPENNA) is disordered. Residue serine 241 is modified to Phosphoserine. The RRM 3 domain occupies 260 to 335 (TTVYVGNLAP…RQMKCSWGSK (76 aa)).

As to quaternary structure, interacts with UBA1A and UBA2A.

The protein resides in the nucleus. Its function is as follows. Heterogeneous nuclear ribonucleoprotein (hnRNP)-like protein that acts as a component of the pre-mRNA processing machinery. Functions to facilitate the nuclear maturation of plant pre-mRNAs. This Arabidopsis thaliana (Mouse-ear cress) protein is Oligouridylate-binding protein 1B (UBP1B).